The sequence spans 300 residues: Acetaldehyde dehydrogenase 1 (300 aa).

11–14 (SGNI) is an NAD(+) binding site. Cysteine 126 acts as the Acyl-thioester intermediate in catalysis. NAD(+)-binding positions include 157–165 (SAGPGTRAN) and asparagine 276.

Belongs to the acetaldehyde dehydrogenase family.

The enzyme catalyses acetaldehyde + NAD(+) + CoA = acetyl-CoA + NADH + H(+). The chain is Acetaldehyde dehydrogenase 1 from Rhodococcus erythropolis (strain PR4 / NBRC 100887).